We begin with the raw amino-acid sequence, 289 residues long: MQNRTLPYFLILPSLLLAAVVIFWPVVHLFEIATHDVNRFGQLREFNDGANFTALFATAEFMNALWRTAVWTVAVVGGALVLSIPVAIILNMDFYGRSVARVIIMLPWAVSLTMTAIVWRWALNGESGMLNSALHGLGLIDTNIQWLASAATAFPMQILVGILVTVPFTTTIFLGGLSSIPDDLYEASSLEGASLWQQFREITFPLLKPFVNIAIVLNTIYVFNSFPIIWVMTQGGPANSTDILVTHLYKLAFRLGKLGEASAVSLIMLAILLVFTVIYIRISTRSEQS.

Helical transmembrane passes span F9–L29, V70–L90, V99–W119, I144–V166, I213–T233, and E260–I280. The region spanning L65 to Y279 is the ABC transmembrane type-1 domain.

The protein belongs to the binding-protein-dependent transport system permease family. In terms of assembly, the complex is composed of two ATP-binding proteins (BRA0745), two transmembrane proteins (BRA0749) and a solute-binding protein (BRA0748).

It is found in the cell inner membrane. Functionally, probably part of an ABC transporter complex. Probably responsible for the translocation of the substrate across the membrane. This Brucella suis biovar 1 (strain 1330) protein is Probable ABC transporter permease protein BRA0749/BS1330_II0742.